A 207-amino-acid chain; its full sequence is High frequency lysogenization protein HflD homolog (207 aa).

This sequence belongs to the HflD family.

It is found in the cytoplasm. The protein localises to the cell inner membrane. The protein is High frequency lysogenization protein HflD homolog of Methylococcus capsulatus (strain ATCC 33009 / NCIMB 11132 / Bath).